The sequence spans 154 residues: Protein FAM162A (154 aa).

A required for proapoptotic activity region spans residues 76–102; it reads RFKKEDEIPETVSLEMLDTAKNKMRVK. A helical transmembrane segment spans residues 103–120; the sequence is ISYLMIALTVVGCICMVI.

Belongs to the UPF0389 family. Interacts with HSP90AB1; HSP90AB1 is essential for FAM162A mitochondrial localization and pro-apoptotic activity. Interacts with VDAC2; the interaction is probably involved in inducing mitochondrial permeability transition.

The protein localises to the mitochondrion membrane. Its function is as follows. Proposed to be involved in regulation of apoptosis; the exact mechanism may differ between cell types/tissues. May be involved in hypoxia-induced cell death of transformed cells implicating cytochrome C release and caspase activation (such as CASP9) and inducing mitochondrial permeability transition. May be involved in hypoxia-induced cell death of neuronal cells probably by promoting release of AIFM1 from mitochondria to cytoplasm and its translocation to the nucleus; however, the involvement of caspases has been reported conflictingly. This chain is Protein FAM162A (FAM162A), found in Pongo abelii (Sumatran orangutan).